The chain runs to 313 residues: Zinc transporter ZitB (313 aa).

Topologically, residues 1–20 are cytoplasmic; it reads MAHSHSHTSSHLPEDNNARR. A helical membrane pass occupies residues 21–41; that stretch reads LLYAFGVTAGFMLVEVVGGFL. The Periplasmic portion of the chain corresponds to 42–47; sequence SGSLAL. Residues 48 to 68 form a helical membrane-spanning segment; that stretch reads LADAGHMLTDTAALLFALLAV. Over 69–89 the chain is Cytoplasmic; sequence QFSRRPPTIRHTFGWLRLTTL. A helical membrane pass occupies residues 90–110; sequence AAFVNAIALVVITILIVWEAI. Residues 111–121 lie on the Periplasmic side of the membrane; it reads ERFRTPRPVEG. The helical transmembrane segment at 122–142 threads the bilayer; it reads GMMMAIAVAGLLANILSFWLL. Residues 143–159 are Cytoplasmic-facing; it reads HHGSEEKNLNVRAAALH. The helical transmembrane segment at 160–180 threads the bilayer; that stretch reads VLGDLLGSVGAIIAALIIIWT. A topological domain (periplasmic) is located at residue Gly181. Residues 182–202 traverse the membrane as a helical segment; the sequence is WTPADPILSILVSLLVLRSAW. Residues 203–313 lie on the Cytoplasmic side of the membrane; that stretch reads RLLKDSVNEL…GVSGHSHHHH (111 aa).

The protein belongs to the cation diffusion facilitator (CDF) transporter (TC 2.A.4) family. SLC30A subfamily.

The protein localises to the cell inner membrane. Functionally, involved in zinc efflux across the cytoplasmic membrane, thus reducing zinc accumulation in the cytoplasm and rendering bacteria more resistant to zinc. It may contribute to zinc homeostasis at low concentrations of zinc, whereas ZntA is required for growth at more toxic concentrations. The polypeptide is Zinc transporter ZitB (zitB) (Escherichia coli (strain K12)).